Here is a 456-residue protein sequence, read N- to C-terminus: tRNA modification GTPase MnmE (456 aa).

The (6S)-5-formyl-5,6,7,8-tetrahydrofolate site is built by Arg26, Glu86, and Arg125. In terms of domain architecture, TrmE-type G spans 222–376 (GLSTAIIGRP…IEDRINQLFF (155 aa)). Asn232 is a binding site for K(+). GTP is bound by residues 232–237 (NVGKSS), 251–257 (TDIEGTT), and 276–279 (DTAG). Ser236 contacts Mg(2+). K(+) contacts are provided by Thr251, Ile253, and Thr256. Thr257 is a Mg(2+) binding site. Lys456 contacts (6S)-5-formyl-5,6,7,8-tetrahydrofolate.

This sequence belongs to the TRAFAC class TrmE-Era-EngA-EngB-Septin-like GTPase superfamily. TrmE GTPase family. In terms of assembly, homodimer. Heterotetramer of two MnmE and two MnmG subunits. The cofactor is K(+).

It localises to the cytoplasm. In terms of biological role, exhibits a very high intrinsic GTPase hydrolysis rate. Involved in the addition of a carboxymethylaminomethyl (cmnm) group at the wobble position (U34) of certain tRNAs, forming tRNA-cmnm(5)s(2)U34. The sequence is that of tRNA modification GTPase MnmE from Streptococcus thermophilus (strain CNRZ 1066).